The primary structure comprises 134 residues: Small ribosomal subunit protein uS11 (134 aa).

Belongs to the universal ribosomal protein uS11 family. Part of the 30S ribosomal subunit. Interacts with proteins S7 and S18. Binds to IF-3.

In terms of biological role, located on the platform of the 30S subunit, it bridges several disparate RNA helices of the 16S rRNA. Forms part of the Shine-Dalgarno cleft in the 70S ribosome. The protein is Small ribosomal subunit protein uS11 of Delftia acidovorans (strain DSM 14801 / SPH-1).